We begin with the raw amino-acid sequence, 265 residues long: Undecaprenyl-diphosphatase 1 (265 aa).

7 helical membrane-spanning segments follow: residues 4–24 (IIIA…PISS), 42–62 (AKTF…ILYH), 84–104 (FHVF…HDVI), 108–128 (LFQP…MIFA), 184–204 (SEFS…LDLL), 217–237 (MFAV…VTFL), and 245–265 (LKPF…FVLL).

This sequence belongs to the UppP family.

It localises to the cell membrane. The enzyme catalyses di-trans,octa-cis-undecaprenyl diphosphate + H2O = di-trans,octa-cis-undecaprenyl phosphate + phosphate + H(+). Its function is as follows. Catalyzes the dephosphorylation of undecaprenyl diphosphate (UPP). Confers resistance to bacitracin. The chain is Undecaprenyl-diphosphatase 1 from Bacillus thuringiensis (strain Al Hakam).